The chain runs to 512 residues: Ribonuclease Y (512 aa).

Residues 3–23 (FQIILVVIISALVGLVIGFFI) form a helical membrane-spanning segment. One can recognise a KH domain in the interval 202-265 (TVAVIPLPND…EVARLALERL (64 aa)). The 94-residue stretch at 328 to 421 (VLKHSIEVCH…VQAADAISAA (94 aa)) folds into the HD domain.

The protein belongs to the RNase Y family.

The protein resides in the cell membrane. Functionally, endoribonuclease that initiates mRNA decay. The chain is Ribonuclease Y from Desulforamulus reducens (strain ATCC BAA-1160 / DSM 100696 / MI-1) (Desulfotomaculum reducens).